The following is a 334-amino-acid chain: Geminin coiled-coil domain-containing protein 1 (334 aa).

Residues 82–119 (SQLYRNKQLQDTLVQKEEELARLHEENNHLRQYLNSAL) are a coiled coil. The interval 143–167 (FRKGKRKSKEQRYSPAEIPHPKNAK) is disordered.

It belongs to the GEMC1 family. Post-translationally, highly phosphorylated by CDK2; stimulates initiation of DNA replication.

Its subcellular location is the nucleus. Its function is as follows. Regulator of DNA replication. Promotes initiation of chromosomal DNA replication by mediating TOPBP1- and CDK2-dependent recruitment of CDC45L onto replication origins. This Homo sapiens (Human) protein is Geminin coiled-coil domain-containing protein 1 (GMNC).